We begin with the raw amino-acid sequence, 374 residues long: MPLLTTPYAELDLIRQPEQANDPLQAFDAADEYLLAQLHEQAPDANCRVLVLNDSFGALAVSLAGRLQVVSSGDSHLAHLGLEKNLTRNGLTFDSVPFVPASEHWQGLFDRVLVRVPKTLALLEEQLIRLQGHLAPGAQVIAGAMIKHLPRAAGDLMEKYIGPVQASLAQKKARLLTATVAERPLARSPYPSRYHLDAPALELVNHANVFCREGLDIGTRAFLPHLPRDLGNARVADLGCGNGVLAIASALGNPDAEYTLVDESYMAVQSAQENWRAALGERAANFVAADGLAGVEKQSLDVVLCNPPFHQQQVVGDFLAWRMFQQAREALVVGGALYIVGNRHLGYHSKLARLFRGVEQVAATPKFVILKARK.

This sequence belongs to the methyltransferase superfamily. RlmG family.

The protein resides in the cytoplasm. The catalysed reaction is guanosine(1835) in 23S rRNA + S-adenosyl-L-methionine = N(2)-methylguanosine(1835) in 23S rRNA + S-adenosyl-L-homocysteine + H(+). Specifically methylates the guanine in position 1835 (m2G1835) of 23S rRNA. The polypeptide is Ribosomal RNA large subunit methyltransferase G (Pseudomonas putida (strain GB-1)).